The following is a 258-amino-acid chain: Imidazole glycerol phosphate synthase subunit HisF (258 aa).

Residues Asp11 and Asp130 contribute to the active site.

This sequence belongs to the HisA/HisF family. In terms of assembly, heterodimer of HisH and HisF.

The protein resides in the cytoplasm. The enzyme catalyses 5-[(5-phospho-1-deoxy-D-ribulos-1-ylimino)methylamino]-1-(5-phospho-beta-D-ribosyl)imidazole-4-carboxamide + L-glutamine = D-erythro-1-(imidazol-4-yl)glycerol 3-phosphate + 5-amino-1-(5-phospho-beta-D-ribosyl)imidazole-4-carboxamide + L-glutamate + H(+). The protein operates within amino-acid biosynthesis; L-histidine biosynthesis; L-histidine from 5-phospho-alpha-D-ribose 1-diphosphate: step 5/9. IGPS catalyzes the conversion of PRFAR and glutamine to IGP, AICAR and glutamate. The HisF subunit catalyzes the cyclization activity that produces IGP and AICAR from PRFAR using the ammonia provided by the HisH subunit. The protein is Imidazole glycerol phosphate synthase subunit HisF of Pectobacterium carotovorum subsp. carotovorum (strain PC1).